Here is a 729-residue protein sequence, read N- to C-terminus: Isocitrate dehydrogenase [NADP] (729 aa).

NADP(+) is bound by residues N83 and S85. 5 residues coordinate D-threo-isocitrate: S121, N124, R128, R134, and K244. N124 serves as a coordination point for NADP(+). Position 337 (D337) interacts with Mg(2+). Residues Y407 and R534 each coordinate D-threo-isocitrate. The Mg(2+) site is built by D535 and D539. 5 residues coordinate NADP(+): S572, H576, R587, D589, and R636.

It belongs to the monomeric-type IDH family. In terms of assembly, monomer. Requires Mg(2+) as cofactor. Mn(2+) is required as a cofactor.

The enzyme catalyses D-threo-isocitrate + NADP(+) = 2-oxoglutarate + CO2 + NADPH. In terms of biological role, catalyzes the oxidative decarboxylation of isocitrate to 2-oxoglutarate and carbon dioxide with the concomitant reduction of NADP(+). The polypeptide is Isocitrate dehydrogenase [NADP] (Corynebacterium efficiens (strain DSM 44549 / YS-314 / AJ 12310 / JCM 11189 / NBRC 100395)).